We begin with the raw amino-acid sequence, 147 residues long: Large ribosomal subunit protein bL9 (147 aa).

This sequence belongs to the bacterial ribosomal protein bL9 family.

Binds to the 23S rRNA. The polypeptide is Large ribosomal subunit protein bL9 (Sulfurovum sp. (strain NBC37-1)).